The following is a 530-amino-acid chain: Autoinducer-2 kinase (530 aa).

The protein belongs to the FGGY kinase family.

It is found in the cytoplasm. It carries out the reaction (S)-4,5-dihydroxypentane-2,3-dione + ATP = (2S)-2-hydroxy-3,4-dioxopentyl phosphate + ADP + H(+). In terms of biological role, catalyzes the phosphorylation of autoinducer-2 (AI-2) to phospho-AI-2, which subsequently inactivates the transcriptional regulator LsrR and leads to the transcription of the lsr operon. Phosphorylates the ring-open form of (S)-4,5-dihydroxypentane-2,3-dione (DPD), which is the precursor to all AI-2 signaling molecules, at the C5 position. This chain is Autoinducer-2 kinase, found in Yersinia pseudotuberculosis serotype O:1b (strain IP 31758).